The sequence spans 347 residues: Bombesin receptor-activated protein C6orf89 homolog (347 aa).

Topologically, residues 1–58 (MDLAANEISIYDKLSETVDLVRQTGHQCGMSEKAIEKFIRQLLEKNEPQRPPPQYPLL) are cytoplasmic. The chain crosses the membrane as a helical span at residues 59–79 (IVVYKVLATLGLILLTAYFVI). Over 80-347 (QPFSPLAPEP…ICDGTAFSEL (268 aa)) the chain is Extracellular.

As to quaternary structure, homodimer. Interacts with BRS3. Interacts (via N-terminus) with SIN3B. Glycosylated.

The protein localises to the golgi apparatus membrane. It is found in the cytoplasm. Functionally, exhibits histone deacetylase (HDAC) enhancer properties. May play a role in cell cycle progression and wound repair of bronchial epithelial cells. The polypeptide is Bombesin receptor-activated protein C6orf89 homolog (Pongo abelii (Sumatran orangutan)).